The sequence spans 166 residues: MSQATKRKHVVKEVLGEHIVPSDQQQIVRVLRTPGNNLHEVETAQGQRFLVSMPSKYRKNIWIKRGDFLIVDPIEEGEKVKAEISFVLCKDHVRSLQKEGFWPEAFSEVAEKHNNNRNRQTQPELPAEPQLSGEESSSEDDSDLFVNTNRRQYRESEEESEEEEAA.

The S1-like domain occupies 5 to 89 (TKRKHVVKEV…VKAEISFVLC (85 aa)). Positions 6 to 12 (KRKHVVK) match the Nuclear localization signal motif. Thr33 is modified (phosphothreonine). The Nuclear localization signal signature appears at 56 to 65 (KYRKNIWIKR). The tract at residues 114–166 (NNNRNRQTQPELPAEPQLSGEESSSEDDSDLFVNTNRRQYRESEEESEEEEAA) is disordered. Phosphoserine occurs at positions 132, 136, 137, 138, 156, and 160. A compositionally biased stretch (acidic residues) spans 156–166 (SEEESEEEEAA).

It belongs to the EIF1AD family. In terms of assembly, interacts with GAPDH and STAT1.

It is found in the nucleus. Functionally, plays a role into cellular response to oxidative stress. Decreases cell proliferation. The sequence is that of Probable RNA-binding protein EIF1AD (EIF1AD) from Pongo abelii (Sumatran orangutan).